The primary structure comprises 321 residues: RNLGKVIDTLTCGFADLMGYIPLVGAPLGGAARALAHGVRVLEDGVNYATGNLPGCSFSIFLLALLSCLTVPASAHQVRNSTGLYHVTNDCPNSSIVYEAADAILHTPGCVPCVHEGNVSRCWVAVTPTVATRDGKLPTTQLRRHIDLLVGSATLCSALYVGDLCGSVFLVGQLFTFSPRRHWTTQGCNCSIYPGHITGHRMAWDMMMNWSPTAALVMAQLLRIPQAIMDMIAGAHWGVLAGIAYFSMVGNWAKVLVVLLLFAGVDAETYTSGGNAGHTMTGIVRFFAPGPKQNVHLINTNGSWHINSTALNCNDSLNTGW.

Over 1–52 (RNLGKVIDTLTCGFADLMGYIPLVGAPLGGAARALAHGVRVLEDGVNYATGN) the chain is Cytoplasmic. Residues 6–57 (VIDTLTCGFADLMGYIPLVGAPLGGAARALAHGVRVLEDGVNYATGNLPGCS) form an interaction with APOA2 region. Residues 48-51 (YATG) are important for lipid droplets localization. The helical transmembrane segment at 53–73 (LPGCSFSIFLLALLSCLTVPA) threads the bilayer. Residues 62-75 (LLALLSCLTVPASA) constitute a propeptide, ER anchor for the core protein, removed in mature form by host signal peptidase. The Lumenal segment spans residues 74–242 (SAHQVRNSTG…AGAHWGVLAG (169 aa)). Residues Asn-80, Asn-93, and Asn-118 are each glycosylated (N-linked (GlcNAc...) asparagine; by host). Residues 149 to 180 (LVGSATLCSALYVGDLCGSVFLVGQLFTFSPR) are important for fusion. The N-linked (GlcNAc...) asparagine; by host glycan is linked to Asn-189. The helical transmembrane segment at 243 to 263 (IAYFSMVGNWAKVLVVLLLFA) threads the bilayer. Residues 264 to 321 (GVDAETYTSGGNAGHTMTGIVRFFAPGPKQNVHLINTNGSWHINSTALNCNDSLNTGW) lie on the Lumenal side of the membrane. Residues 268–294 (ETYTSGGNAGHTMTGIVRFFAPGPKQN) form an HVR1 region. Asn-301, Asn-307, and Asn-314 each carry an N-linked (GlcNAc...) (high mannose) asparagine; by host glycan.

Belongs to the hepacivirus polyprotein family. In terms of assembly, homooligomer. Interacts with E1 (via C-terminus). Interacts with the non-structural protein 5A. Interacts (via N-terminus) with host STAT1 (via SH2 domain); this interaction results in decreased STAT1 phosphorylation and ubiquitin-mediated proteasome-dependent STAT1 degradation, leading to decreased IFN-stimulated gene transcription. Interacts with host STAT3; this interaction constitutively activates STAT3. Interacts with host LTBR receptor. Interacts with host TNFRSF1A receptor and possibly induces apoptosis. Interacts with host HNRPK. Interacts with host YWHAE. Interacts with host UBE3A/E6AP. Interacts with host DDX3X. Interacts with host APOA2. Interacts with host RXRA protein. Interacts with host SP110 isoform 3/Sp110b; this interaction sequesters the transcriptional corepressor SP110 away from the nucleus. Interacts with host CREB3 nuclear transcription protein; this interaction triggers cell transformation. Interacts with host ACY3. Interacts with host C1QR1. Interacts with host RBM24; this interaction, which enhances the interaction of the mature core protein with 5'-UTR, may inhibit viral translation and favor replication. Interacts with host EIF2AK2/PKR; this interaction induces the autophosphorylation of EIF2AK2. Part of the viral assembly initiation complex composed of NS2, E1, E2, NS3, NS4A, NS5A and the mature core protein. Forms a heterodimer with envelope glycoprotein E2. Interacts with mature core protein. Interacts with protease NS2. The heterodimer E1/E2 interacts with host CLDN1; this interaction plays a role in viral entry into host cell. Interacts with host SPSB2 (via C-terminus). Part of the viral assembly initiation complex composed of NS2, E1, E2, NS3, NS4A, NS5A and the mature core protein. As to quaternary structure, forms a heterodimer with envelope glycoprotein E1. Interacts with host CD81 and SCARB1 receptors; these interactions play a role in viral entry into host cell. Interacts with host EIF2AK2/PKR; this interaction inhibits EIF2AK2 and probably allows the virus to evade the innate immune response. Interacts with host CD209/DC-SIGN and CLEC4M/DC-SIGNR. Interact with host SPCS1; this interaction is essential for viral particle assembly. Interacts with protease NS2. The heterodimer E1/E2 interacts with host CLDN1; this interaction plays a role in viral entry into host cell. Part of the viral assembly initiation complex composed of NS2, E1, E2, NS3, NS4A, NS5A and the mature core protein. In terms of processing, specific enzymatic cleavages in vivo yield mature proteins. The structural proteins, core, E1, E2 and p7 are produced by proteolytic processing by host signal peptidases. The core protein precursor is synthesized as a 23 kDa, which is retained in the ER membrane through the hydrophobic signal peptide. Cleavage by the signal peptidase releases the 21 kDa mature core protein. The cleavage of the core protein precursor occurs between aminoacids 176 and 188 but the exact cleavage site is not known. Some degraded forms of the core protein appear as well during the course of infection. The other proteins (p7, NS2, NS3, NS4A, NS4B, NS5A and NS5B) are cleaved by the viral proteases. Autoprocessing between NS2 and NS3 is mediated by the NS2 cysteine protease catalytic domain and regulated by the NS3 N-terminal domain. Post-translationally, phosphorylated by host PKC and PKA. Ubiquitinated; mediated by UBE3A and leading to core protein subsequent proteasomal degradation. In terms of processing, highly N-glycosylated.

The protein localises to the host endoplasmic reticulum membrane. It localises to the host mitochondrion membrane. Its subcellular location is the virion. It is found in the host cytoplasm. The protein resides in the host nucleus. The protein localises to the host lipid droplet. It localises to the virion membrane. In terms of biological role, packages viral RNA to form a viral nucleocapsid, and promotes virion budding. Participates in the viral particle production as a result of its interaction with the non-structural protein 5A. Binds RNA and may function as a RNA chaperone to induce the RNA structural rearrangements taking place during virus replication. Modulates viral translation initiation by interacting with viral IRES and 40S ribosomal subunit. Affects various cell signaling pathways, host immunity and lipid metabolism. Prevents the establishment of cellular antiviral state by blocking the interferon-alpha/beta (IFN-alpha/beta) and IFN-gamma signaling pathways and by blocking the formation of phosphorylated STAT1 and promoting ubiquitin-mediated proteasome-dependent degradation of STAT1. Activates STAT3 leading to cellular transformation. Regulates the activity of cellular genes, including c-myc and c-fos. May repress the promoter of p53, and sequester CREB3 and SP110 isoform 3/Sp110b in the cytoplasm. Represses cell cycle negative regulating factor CDKN1A, thereby interrupting an important check point of normal cell cycle regulation. Targets transcription factors involved in the regulation of inflammatory responses and in the immune response: suppresses TNF-induced NF-kappa-B activation, and activates AP-1. Binds to dendritic cells (DCs) via C1QR1, resulting in down-regulation of T-lymphocytes proliferation. Alters lipid metabolism by interacting with hepatocellular proteins involved in lipid accumulation and storage. Induces up-regulation of FAS promoter activity, and thereby contributes to the increased triglyceride accumulation in hepatocytes (steatosis). Forms a heterodimer with envelope glycoprotein E2, which mediates virus attachment to the host cell, virion internalization through clathrin-dependent endocytosis and fusion with host membrane. Fusion with the host cell is most likely mediated by both E1 and E2, through conformational rearrangements of the heterodimer required for fusion rather than a classical class II fusion mechanism. E1/E2 heterodimer binds host apolipoproteins such as APOB and ApoE thereby forming a lipo-viro-particle (LVP). APOE associated to the LVP allows the initial virus attachment to cell surface receptors such as the heparan sulfate proteoglycans (HSPGs), syndecan-1 (SDC1), syndecan-1 (SDC2), the low-density lipoprotein receptor (LDLR) and scavenger receptor class B type I (SCARB1). The cholesterol transfer activity of SCARB1 allows E2 exposure and binding of E2 to SCARB1 and the tetraspanin CD81. E1/E2 heterodimer binding on CD81 activates the epithelial growth factor receptor (EGFR) signaling pathway. Diffusion of the complex E1-E2-EGFR-SCARB1-CD81 to the cell lateral membrane allows further interaction with Claudin 1 (CLDN1) and occludin (OCLN) to finally trigger HCV entry. Functionally, forms a heterodimer with envelope glycoprotein E1, which mediates virus attachment to the host cell, virion internalization through clathrin-dependent endocytosis and fusion with host membrane. Fusion with the host cell is most likely mediated by both E1 and E2, through conformational rearrangements of the heterodimer required for fusion rather than a classical class II fusion mechanism. The interaction between envelope glycoprotein E2 and host apolipoprotein E/APOE allows the proper assembly, maturation and infectivity of the viral particles. This interaction is probably promoted via the up-regulation of cellular autophagy by the virus. E1/E2 heterodimer binds host apolipoproteins such as APOB and APOE thereby forming a lipo-viro-particle (LVP). APOE associated to the LVP allows the initial virus attachment to cell surface receptors such as the heparan sulfate proteoglycans (HSPGs), syndecan-1 (SDC1), syndecan-1 (SDC2), the low-density lipoprotein receptor (LDLR) and scavenger receptor class B type I (SCARB1). The cholesterol transfer activity of SCARB1 allows E2 exposure and binding of E2 to SCARB1 and the tetraspanin CD81. E1/E2 heterodimer binding on CD81 activates the epithelial growth factor receptor (EGFR) signaling pathway. Diffusion of the complex E1-E2-EGFR-SCARB1-CD81 to the cell lateral membrane allows further interaction with Claudin 1 (CLDN1) and occludin (OCLN) to finally trigger HCV entry. Inhibits host EIF2AK2/PKR activation, preventing the establishment of an antiviral state. Viral ligand for CD209/DC-SIGN and CLEC4M/DC-SIGNR, which are respectively found on dendritic cells (DCs), and on liver sinusoidal endothelial cells and macrophage-like cells of lymph node sinuses. These interactions allow the capture of circulating HCV particles by these cells and subsequent facilitated transmission to permissive cells such as hepatocytes and lymphocyte subpopulations. This is Genome polyprotein from Hepatitis C virus (isolate HCT18) (HCV).